A 695-amino-acid chain; its full sequence is Pentatricopeptide repeat-containing protein 1, mitochondrial (695 aa).

PPR repeat units lie at residues 133–169, 170–204, 205–243, 244–278, 279–315, and 316–352; these read TQYW…RLQP, LECN…DLEP, SDAT…NFQL, NLKT…GHAV, TEET…GIKP, and SRHG…TILL. The interval 391-416 is disordered; sequence QKLEGPPALPEARVTSRTQPEVETTA. PPR repeat units lie at residues 470–485, 517–551, 552–583, and 584–618; these read EGFL…QPDI, DVTF…GIVP, NLRT…QVSP, and NIHI…SVPV. The interval 672–695 is disordered; the sequence is WQEFQNKPVGDQDTTDKAGGLRDG. A compositionally biased stretch (basic and acidic residues) spans 685–695; it reads TTDKAGGLRDG.

This sequence belongs to the PTCD1 family. In terms of assembly, associates with mitochondrial leucine tRNAs. Interacts with ELAC2.

It localises to the mitochondrion. The protein resides in the mitochondrion matrix. Functionally, mitochondrial protein implicated in negative regulation of leucine tRNA levels, as well as negative regulation of mitochondria-encoded proteins and COX activity. Also affects the 3'-processing of mitochondrial tRNAs. The sequence is that of Pentatricopeptide repeat-containing protein 1, mitochondrial (Ptcd1) from Mus musculus (Mouse).